The following is a 276-amino-acid chain: 2,3,4,5-tetrahydropyridine-2,6-dicarboxylate N-succinyltransferase (276 aa).

2 residues coordinate substrate: arginine 108 and aspartate 145.

This sequence belongs to the transferase hexapeptide repeat family. In terms of assembly, homotrimer.

It is found in the cytoplasm. The enzyme catalyses (S)-2,3,4,5-tetrahydrodipicolinate + succinyl-CoA + H2O = (S)-2-succinylamino-6-oxoheptanedioate + CoA. Its pathway is amino-acid biosynthesis; L-lysine biosynthesis via DAP pathway; LL-2,6-diaminopimelate from (S)-tetrahydrodipicolinate (succinylase route): step 1/3. This Caulobacter vibrioides (strain ATCC 19089 / CIP 103742 / CB 15) (Caulobacter crescentus) protein is 2,3,4,5-tetrahydropyridine-2,6-dicarboxylate N-succinyltransferase.